Reading from the N-terminus, the 126-residue chain is MHLSLLKTKIHRATVTHSELNYEGSIAIDDNLLAATGIREFEQVHIWDVTNGARFSTYAIRAEAGSGVVSLNGGAARHVQVGDIIIIAAFASMTEQEADSFKPKLVYVDGKNQITHTNDTIPTQAA.

The active-site Schiff-base intermediate with substrate; via pyruvic acid is Ser25. Ser25 is subject to Pyruvic acid (Ser). Thr57 is a binding site for substrate. The Proton donor role is filled by Tyr58. 73–75 (GGA) contributes to the substrate binding site.

Belongs to the PanD family. As to quaternary structure, heterooctamer of four alpha and four beta subunits. Pyruvate is required as a cofactor. Post-translationally, is synthesized initially as an inactive proenzyme, which is activated by self-cleavage at a specific serine bond to produce a beta-subunit with a hydroxyl group at its C-terminus and an alpha-subunit with a pyruvoyl group at its N-terminus.

It localises to the cytoplasm. It catalyses the reaction L-aspartate + H(+) = beta-alanine + CO2. It participates in cofactor biosynthesis; (R)-pantothenate biosynthesis; beta-alanine from L-aspartate: step 1/1. Catalyzes the pyruvoyl-dependent decarboxylation of aspartate to produce beta-alanine. This chain is Aspartate 1-decarboxylase, found in Stenotrophomonas maltophilia (strain K279a).